We begin with the raw amino-acid sequence, 255 residues long: tRNA (guanine-N(1)-)-methyltransferase (255 aa).

Residues Gly-117 and 137–142 each bind S-adenosyl-L-methionine; that span reads IGDYVL.

Belongs to the RNA methyltransferase TrmD family. Homodimer.

The protein localises to the cytoplasm. It catalyses the reaction guanosine(37) in tRNA + S-adenosyl-L-methionine = N(1)-methylguanosine(37) in tRNA + S-adenosyl-L-homocysteine + H(+). Its function is as follows. Specifically methylates guanosine-37 in various tRNAs. The protein is tRNA (guanine-N(1)-)-methyltransferase of Glaesserella parasuis serovar 5 (strain SH0165) (Haemophilus parasuis).